A 313-amino-acid chain; its full sequence is Olfactory receptor 1J1 (313 aa).

At 1-25 (MRLKNHSSVSEFLLLGFPIRPEQGG) the chain is on the extracellular side. The N-linked (GlcNAc...) asparagine glycan is linked to N5. Residues 26-46 (IFFSLFLAMYLITVLGNLLII) traverse the membrane as a helical segment. At 47 to 57 (LLIRLDSHLHT) the chain is on the cytoplasmic side. A helical membrane pass occupies residues 58–78 (PMYFFLSHLAFTDISFSSVTV). Topologically, residues 79–97 (PKMLTKVQNQPIPITYEEC) are extracellular. A disulfide bridge connects residues C97 and C189. Residues 98–118 (VSQTYFFIFFADLDSFLITSM) traverse the membrane as a helical segment. The Cytoplasmic segment spans residues 119–142 (AYDRYMAICHPLHYITIMSQSRCA). The chain crosses the membrane as a helical span at residues 143–163 (MLVAVSWVIASACALLHSLLL). Over 164-196 (DQLSFCADHTVPHFFCDLGALLKLSCSDTSLNQ) the chain is Extracellular. Residues 197–217 (LVIFTAGLAAIMLPFLCILIS) form a helical membrane-spanning segment. The Cytoplasmic portion of the chain corresponds to 218 to 240 (YGRIGFTILQVPTTKGICKALST). The helical transmembrane segment at 241–261 (CGSHLSVVALYYGSIIGLYFL) threads the bilayer. At 262–271 (PPSNSKINNN) the chain is on the extracellular side. Residues 272 to 292 (IVASVMYTVVTPMLNPFIYSL) traverse the membrane as a helical segment. Residues 293 to 313 (RNKDMKGALKKLLSKKTEFSK) lie on the Cytoplasmic side of the membrane.

This sequence belongs to the G-protein coupled receptor 1 family.

The protein resides in the cell membrane. Odorant receptor. The sequence is that of Olfactory receptor 1J1 from Mus musculus (Mouse).